The following is a 514-amino-acid chain: GMP synthase [glutamine-hydrolyzing] (514 aa).

The Glutamine amidotransferase type-1 domain maps to 9–199 (KIIVLDFGSQ…ALNVCGCKGD (191 aa)). Catalysis depends on Cys86, which acts as the Nucleophile. Residues His173 and Glu175 contribute to the active site. The 190-residue stretch at 200–389 (WTMENFSEVE…LGMPDAIVWR (190 aa)) folds into the GMPS ATP-PPase domain. 227–233 (SGGVDSS) contributes to the ATP binding site.

As to quaternary structure, homodimer.

The catalysed reaction is XMP + L-glutamine + ATP + H2O = GMP + L-glutamate + AMP + diphosphate + 2 H(+). It participates in purine metabolism; GMP biosynthesis; GMP from XMP (L-Gln route): step 1/1. Its function is as follows. Catalyzes the synthesis of GMP from XMP. The sequence is that of GMP synthase [glutamine-hydrolyzing] from Listeria monocytogenes serotype 4b (strain F2365).